The chain runs to 613 residues: Dihydroxy-acid dehydratase (613 aa).

A Mg(2+)-binding site is contributed by Asp81. Cys122 serves as a coordination point for [2Fe-2S] cluster. Residues Asp123 and Lys124 each coordinate Mg(2+). At Lys124 the chain carries N6-carboxylysine. Residue Cys195 participates in [2Fe-2S] cluster binding. Residue Glu491 participates in Mg(2+) binding. The active-site Proton acceptor is the Ser517.

This sequence belongs to the IlvD/Edd family. As to quaternary structure, homodimer. [2Fe-2S] cluster is required as a cofactor. It depends on Mg(2+) as a cofactor.

It catalyses the reaction (2R)-2,3-dihydroxy-3-methylbutanoate = 3-methyl-2-oxobutanoate + H2O. It carries out the reaction (2R,3R)-2,3-dihydroxy-3-methylpentanoate = (S)-3-methyl-2-oxopentanoate + H2O. It participates in amino-acid biosynthesis; L-isoleucine biosynthesis; L-isoleucine from 2-oxobutanoate: step 3/4. It functions in the pathway amino-acid biosynthesis; L-valine biosynthesis; L-valine from pyruvate: step 3/4. Functionally, functions in the biosynthesis of branched-chain amino acids. Catalyzes the dehydration of (2R,3R)-2,3-dihydroxy-3-methylpentanoate (2,3-dihydroxy-3-methylvalerate) into 2-oxo-3-methylpentanoate (2-oxo-3-methylvalerate) and of (2R)-2,3-dihydroxy-3-methylbutanoate (2,3-dihydroxyisovalerate) into 2-oxo-3-methylbutanoate (2-oxoisovalerate), the penultimate precursor to L-isoleucine and L-valine, respectively. This Photobacterium profundum (strain SS9) protein is Dihydroxy-acid dehydratase.